We begin with the raw amino-acid sequence, 579 residues long: Peptidoglycan D,D-transpeptidase FtsI (579 aa).

Residues 15–35 (FCVIVGLLLAMVGAIVWRIVD) traverse the membrane as a helical segment. Ser294 functions as the Acyl-ester intermediate in the catalytic mechanism. The segment at 558 to 579 (DNLPTATEQQQVNAAPAKGGRG) is disordered. Residues 561-570 (PTATEQQQVN) are compositionally biased toward polar residues.

This sequence belongs to the transpeptidase family. FtsI subfamily.

The protein localises to the cell inner membrane. The catalysed reaction is Preferential cleavage: (Ac)2-L-Lys-D-Ala-|-D-Ala. Also transpeptidation of peptidyl-alanyl moieties that are N-acyl substituents of D-alanine.. The protein operates within cell wall biogenesis; peptidoglycan biosynthesis. Its function is as follows. Catalyzes cross-linking of the peptidoglycan cell wall at the division septum. Binds penicillin. The chain is Peptidoglycan D,D-transpeptidase FtsI from Pseudomonas aeruginosa (strain ATCC 15692 / DSM 22644 / CIP 104116 / JCM 14847 / LMG 12228 / 1C / PRS 101 / PAO1).